The chain runs to 921 residues: AdoMet-dependent rRNA methyltransferase SPB1 (921 aa).

Positions 58, 60, 78, 94, and 119 each coordinate S-adenosyl-L-methionine. Residue lysine 159 is the Proton acceptor of the active site. Residues 367-414 (VEEMDEDDQIDDELARLNEEAARKARKERRRKNELRQKKILKMQLQMT) are a coiled coil. Disordered regions lie at residues 448–476 (ALIQQADVSDDESETIVSSQHTDDDDPET), 491–604 (EFKQ…KRSL), 635–713 (ELDE…GKQK), 814–835 (LEKAQKKAETINENEDISEKEK), and 866–921 (RGLK…GPRN). Residues 491–522 (EFKQKQSERDAKFRAKQARLQDAKNDSWHGIK) show a composition bias toward basic and acidic residues. Acidic residues-rich tracts occupy residues 523-542 (DDEENDEDDDEANLSDESEG), 555-568 (ETFDTDDEEDEEDE), 635-684 (ELDE…DDFE), and 697-708 (DEEWDLNGEDEE). A coiled-coil region spans residues 796-835 (IKKVAEAKARKKMRTLRRLEKAQKKAETINENEDISEKEK). Positions 814–823 (LEKAQKKAET) are enriched in basic and acidic residues. Residues 868 to 879 (LKGRPKGTKGRY) show a composition bias toward basic residues. Residues 880–892 (KMVDPRMKKELRA) are compositionally biased toward basic and acidic residues.

The protein belongs to the class I-like SAM-binding methyltransferase superfamily. RNA methyltransferase RlmE family. SPB1 subfamily. In terms of assembly, component of the nucleolar and nucleoplasmic pre-60S ribosomal particle.

The protein localises to the nucleus. It is found in the nucleolus. It carries out the reaction a ribonucleotide in rRNA + S-adenosyl-L-methionine = a 2'-O-methylribonucleotide in rRNA + S-adenosyl-L-homocysteine + H(+). Its function is as follows. Required for proper assembly of pre-ribosomal particles during the biogenesis of the 60S ribosomal subunit. The sequence is that of AdoMet-dependent rRNA methyltransferase SPB1 from Mycosarcoma maydis (Corn smut fungus).